A 273-amino-acid polypeptide reads, in one-letter code: Hemin import ATP-binding protein HmuV (273 aa).

In terms of domain architecture, ABC transporter spans 2-256; sequence LTAHHLDVAR…AHIAQCYGFA (255 aa). ATP is bound at residue 34–41; the sequence is GRNGAGKS.

The protein belongs to the ABC transporter superfamily. Heme (hemin) importer (TC 3.A.1.14.5) family. As to quaternary structure, the complex is composed of two ATP-binding proteins (HmuV), two transmembrane proteins (HmuU) and a solute-binding protein (HmuT).

The protein resides in the cell inner membrane. Its function is as follows. Part of the ABC transporter complex HmuTUV involved in hemin import. Responsible for energy coupling to the transport system. The sequence is that of Hemin import ATP-binding protein HmuV from Burkholderia ambifaria (strain ATCC BAA-244 / DSM 16087 / CCUG 44356 / LMG 19182 / AMMD) (Burkholderia cepacia (strain AMMD)).